Consider the following 373-residue polypeptide: SUN domain-containing protein 5 (373 aa).

The Nuclear segment spans residues 1-103 (MPRTRNIGAL…LFCQKVMEKM (103 aa)). The helical transmembrane segment at 104–120 (GLLVLCVFGFWMFSMHL) threads the bilayer. Topologically, residues 121-373 (PSKVEVWQDD…PKDSHLEPLS (253 aa)) are perinuclear space. The stretch at 136 to 180 (LQSLRMYQEKVRHHTGEIQDLRGSMNQLIAKLQKMEAISDEQKMA) forms a coiled coil. Positions 204–362 (ASIDFEHTSA…YRVRVHGSVT (159 aa)) constitute an SUN domain.

Probable homotrimer. Interacts with DNAJB13. Post-translationally, highly glycosylated in the Golgi apparatus during spermiogenesis. In terms of tissue distribution, testis-specific, abundantly expressed in spermatocytes and round spermatids.

The protein resides in the nucleus inner membrane. The protein localises to the golgi apparatus. Plays an essential role in anchoring sperm head to the tail. Is responsible for the attachment of the coupling apparatus to the sperm nuclear envelope. The protein is SUN domain-containing protein 5 (Sun5) of Mus musculus (Mouse).